A 297-amino-acid polypeptide reads, in one-letter code: Virulence genes transcriptional activator (297 aa).

One can recognise an HTH lysR-type domain in the interval 1 to 61 (MDFLINKKLK…IRKNGTLIPT (61 aa)). The segment at residues 21-40 (FSIATSVLYITRTPLSRVIS) is a DNA-binding region (H-T-H motif).

It belongs to the LysR transcriptional regulatory family.

Its subcellular location is the cytoplasm. Positive regulator for the plasmid-encoded virulence factors SpvA, SpvB, and SpvC. The chain is Virulence genes transcriptional activator (mkaC) from Salmonella typhimurium (strain LT2 / SGSC1412 / ATCC 700720).